The following is a 160-amino-acid chain: Transcription elongation factor GreA (160 aa).

This sequence belongs to the GreA/GreB family.

Its function is as follows. Necessary for efficient RNA polymerase transcription elongation past template-encoded arresting sites. The arresting sites in DNA have the property of trapping a certain fraction of elongating RNA polymerases that pass through, resulting in locked ternary complexes. Cleavage of the nascent transcript by cleavage factors such as GreA or GreB allows the resumption of elongation from the new 3'terminus. GreA releases sequences of 2 to 3 nucleotides. The chain is Transcription elongation factor GreA from Francisella tularensis subsp. tularensis (strain FSC 198).